We begin with the raw amino-acid sequence, 464 residues long: Soluble pyridine nucleotide transhydrogenase (464 aa).

35 to 44 (DDRRQVGGNC) provides a ligand contact to FAD.

The protein belongs to the class-I pyridine nucleotide-disulfide oxidoreductase family. The cofactor is FAD.

The protein resides in the cytoplasm. It carries out the reaction NAD(+) + NADPH = NADH + NADP(+). Its function is as follows. Conversion of NADPH, generated by peripheral catabolic pathways, to NADH, which can enter the respiratory chain for energy generation. The chain is Soluble pyridine nucleotide transhydrogenase from Pseudomonas putida (strain GB-1).